The chain runs to 757 residues: Endonuclease MutS2 (757 aa).

321-328 (GPNMGGKT) lines the ATP pocket. The Smr domain occupies 681–756 (IDIRGMTVEE…GTGVTVVEVK (76 aa)).

The protein belongs to the DNA mismatch repair MutS family. MutS2 subfamily. In terms of assembly, homodimer. Binds to stalled ribosomes, contacting rRNA.

Its function is as follows. Endonuclease that is involved in the suppression of homologous recombination and thus may have a key role in the control of bacterial genetic diversity. In terms of biological role, acts as a ribosome collision sensor, splitting the ribosome into its 2 subunits. Detects stalled/collided 70S ribosomes which it binds and splits by an ATP-hydrolysis driven conformational change. Acts upstream of the ribosome quality control system (RQC), a ribosome-associated complex that mediates the extraction of incompletely synthesized nascent chains from stalled ribosomes and their subsequent degradation. Probably generates substrates for RQC. In Thermotoga sp. (strain RQ2), this protein is Endonuclease MutS2.